The chain runs to 236 residues: uncharacterized protein (236 aa).

The protein localises to the virion. This is an uncharacterized protein from Acanthamoeba polyphaga (Amoeba).